The chain runs to 141 residues: Large ribosomal subunit protein uL11 (141 aa).

It belongs to the universal ribosomal protein uL11 family. Part of the ribosomal stalk of the 50S ribosomal subunit. Interacts with L10 and the large rRNA to form the base of the stalk. L10 forms an elongated spine to which L12 dimers bind in a sequential fashion forming a multimeric L10(L12)X complex. In terms of processing, one or more lysine residues are methylated.

Functionally, forms part of the ribosomal stalk which helps the ribosome interact with GTP-bound translation factors. This Chlorobium chlorochromatii (strain CaD3) protein is Large ribosomal subunit protein uL11.